Reading from the N-terminus, the 202-residue chain is MKSFKETIINACLMGFFSFFSLSSVIFVKNITNNQIKNIKEKQKNTLIQQVIPRVMYHSFEKKYFLIKDKLLGDQKKHNLWLLFKNKQAKVAVVESIAPDGYSGSISILVAAYLNGKIIGVRVLSHKETPGIGDKIEISISNWITKFQDMNVIDLKDKKFLLKKYGGKIEQFTGATITPQSVSNAVKRTVVFIKKIPLIFSL.

Residues 11-31 form a helical membrane-spanning segment; the sequence is ACLMGFFSFFSLSSVIFVKNI. Thr176 bears the FMN phosphoryl threonine mark.

The protein belongs to the RnfG family. The complex is composed of six subunits: RnfA, RnfB, RnfC, RnfD, RnfE and RnfG. The cofactor is FMN.

The protein resides in the cell inner membrane. Part of a membrane-bound complex that couples electron transfer with translocation of ions across the membrane. This chain is Ion-translocating oxidoreductase complex subunit G, found in Buchnera aphidicola subsp. Schizaphis graminum (strain Sg).